The primary structure comprises 106 residues: Small ribosomal subunit protein uS10 (106 aa).

Belongs to the universal ribosomal protein uS10 family. As to quaternary structure, part of the 30S ribosomal subunit.

Involved in the binding of tRNA to the ribosomes. This chain is Small ribosomal subunit protein uS10, found in Mycoplasma genitalium (strain ATCC 33530 / DSM 19775 / NCTC 10195 / G37) (Mycoplasmoides genitalium).